A 522-amino-acid polypeptide reads, in one-letter code: Maturase K (522 aa).

The protein belongs to the intron maturase 2 family. MatK subfamily.

Its subcellular location is the plastid. The protein resides in the chloroplast. Functionally, usually encoded in the trnK tRNA gene intron. Probably assists in splicing its own and other chloroplast group II introns. The protein is Maturase K of Iris danfordiae (Danford iris).